A 256-amino-acid chain; its full sequence is Protein RGF1 INDUCIBLE TRANSCRIPTION FACTOR 1 (256 aa).

The segment at 21 to 59 adopts a B box-type zinc-finger fold; that stretch reads CPYHETAKKNERNVCCLDCCTSLCPHCVPSHRFHRLLQV.

As to expression, expressed predominantly in root meristematic zones.

Its subcellular location is the nucleus. Probable transcription factor that plays a central role in mediating RGF1 hormone peptide signaling leading to the production of reactive oxygen species (ROS) in roots to modulate meristem size and root growth, probably via oxidative post-translational modification of the transcription factor PLETHORA (e.g. PLT1 and PLT2). This Arabidopsis thaliana (Mouse-ear cress) protein is Protein RGF1 INDUCIBLE TRANSCRIPTION FACTOR 1.